Here is a 178-residue protein sequence, read N- to C-terminus: Large ribosomal subunit protein uL6 (178 aa).

The protein belongs to the universal ribosomal protein uL6 family. In terms of assembly, part of the 50S ribosomal subunit.

In terms of biological role, this protein binds to the 23S rRNA, and is important in its secondary structure. It is located near the subunit interface in the base of the L7/L12 stalk, and near the tRNA binding site of the peptidyltransferase center. This Coxiella burnetii (strain CbuG_Q212) (Coxiella burnetii (strain Q212)) protein is Large ribosomal subunit protein uL6.